Reading from the N-terminus, the 512-residue chain is Cytochrome P450 monooxygenase 208 (512 aa).

The helical transmembrane segment at 4 to 24 threads the bilayer; it reads LFLVLDTGAAVLLVALLFVVY. Residue C438 participates in heme binding.

It belongs to the cytochrome P450 family. Heme serves as cofactor.

It is found in the membrane. It participates in secondary metabolite biosynthesis. Functionally, cytochrome P450 monooxygenase that is able to use 7-ethoxycoumarin as a substrate for oxidation. In Postia placenta (strain ATCC 44394 / Madison 698-R) (Brown rot fungus), this protein is Cytochrome P450 monooxygenase 208.